We begin with the raw amino-acid sequence, 382 residues long: Galactokinase (382 aa).

A substrate-binding site is contributed by 34–37; that stretch reads EHTD. 124-130 is an ATP binding site; sequence GAGLSSS. 2 residues coordinate Mg(2+): Ser-130 and Glu-162. The active-site Proton acceptor is the Asp-174. Substrate is bound at residue Tyr-223.

This sequence belongs to the GHMP kinase family. GalK subfamily.

It is found in the cytoplasm. It carries out the reaction alpha-D-galactose + ATP = alpha-D-galactose 1-phosphate + ADP + H(+). The protein operates within carbohydrate metabolism; galactose metabolism. Catalyzes the transfer of the gamma-phosphate of ATP to D-galactose to form alpha-D-galactose-1-phosphate (Gal-1-P). The polypeptide is Galactokinase (Escherichia coli O1:K1 / APEC).